The following is a 214-amino-acid chain: UBX domain-containing protein 10 (214 aa).

A compositionally biased stretch (basic residues) spans 1–13; that stretch reads MHVTRPKSSKGRS. The segment at 1-79 is disordered; sequence MHVTRPKSSK…AYDRPPEEPV (79 aa). Over residues 16–25 the composition is skewed to polar residues; the sequence is MITNSSMIYT. A compositionally biased stretch (low complexity) spans 49-60; that stretch reads SLRSRAILRRSS. The 78-residue stretch at 127-204 folds into the UBX domain; sequence PEESDLLLAI…GVLNKSVLCI (78 aa).

Belongs to the UBXN10 family.

The protein localises to the cell projection. The protein resides in the cilium. Required for ciliogenesis. Acts as a tethering factor that facilitates recruitment of vcp/p97 to the intraflagellar transport complex B (IFT-B) in cilia. This Danio rerio (Zebrafish) protein is UBX domain-containing protein 10.